Reading from the N-terminus, the 456-residue chain is Gamma-aminobutyric acid receptor subunit alpha-1 (456 aa).

The N-terminal stretch at 1-27 is a signal peptide; the sequence is MKKSPGLSDYLWAWTLFLSTLTGRSYG. Residues 28 to 253 lie on the Extracellular side of the membrane; the sequence is QPSLQDELKD…FHLKRKIGYF (226 aa). Asn38 carries an N-linked (GlcNAc...) asparagine glycan. Arg94 is a 4-aminobutanoate binding site. Asn138 is a glycosylation site (N-linked (GlcNAc...) asparagine). Thr157 is a binding site for 4-aminobutanoate. Residues Cys166 and Cys180 are joined by a disulfide bond. A helical transmembrane segment spans residues 254–274; that stretch reads VIQTYLPCIMTVILSQVSFWL. The Cytoplasmic portion of the chain corresponds to 275–279; the sequence is NRESV. Residues 280–301 traverse the membrane as a helical segment; the sequence is PARTVFGVTTVLTMTTLSISAR. At 302–311 the chain is on the extracellular side; the sequence is NSLPKVAYAT. The chain crosses the membrane as a helical span at residues 312-333; it reads AMDWFIAVCYAFVFSALIEFAT. Residues 334–421 lie on the Cytoplasmic side of the membrane; it reads VNYFTKRGYA…TFNSVSKIDR (88 aa). The helical transmembrane segment at 422 to 441 threads the bilayer; that stretch reads LSRIAFPLLFGIFNLVYWAT. At 442 to 456 the chain is on the extracellular side; the sequence is YLNREPQLKAPTPHQ.

The protein belongs to the ligand-gated ion channel (TC 1.A.9) family. Gamma-aminobutyric acid receptor (TC 1.A.9.5) subfamily. GABRA1 sub-subfamily. Heteropentamer, formed by a combination of alpha (GABRA1-6), beta (GABRB1-3), gamma (GABRG1-3), delta (GABRD), epsilon (GABRE), rho (GABRR1-3), pi (GABRP) and theta (GABRQ) subunits, each subunit exhibiting distinct physiological and pharmacological properties. Interacts with UBQLN1. Interacts with TRAK1. Interacts with KIF21B. Identified in a complex of 720 kDa composed of LHFPL4, NLGN2, GABRA1, GABRB2, GABRG2 and GABRB3. Interacts with LHFPL4. Interacts with NLGN2. Interacts with SHISA7; interaction leads to the regulation of GABA(A) receptor trafficking, channel deactivation kinetics and pharmacology. As to expression, cerebellar granule cells, Purkinje cells and stellate/basket cells.

The protein localises to the postsynaptic cell membrane. Its subcellular location is the cell membrane. It localises to the cytoplasmic vesicle membrane. It carries out the reaction chloride(in) = chloride(out). Its activity is regulated as follows. Allosterically activated by benzodiazepines, the neuroanesthetic alphaxalone and pentobarbital. Inhibited by the antagonist bicuculline. Potentiated by histamine. Its function is as follows. Alpha subunit of the heteropentameric ligand-gated chloride channel gated by gamma-aminobutyric acid (GABA), a major inhibitory neurotransmitter in the brain. GABA-gated chloride channels, also named GABA(A) receptors (GABAAR), consist of five subunits arranged around a central pore and contain GABA active binding site(s) located at the alpha and beta subunit interface(s). When activated by GABA, GABAARs selectively allow the flow of chloride anions across the cell membrane down their electrochemical gradient. Alpha-1/GABRA1-containing GABAARs are largely synaptic. Chloride influx into the postsynaptic neuron following GABAAR opening decreases the neuron ability to generate a new action potential, thereby reducing nerve transmission. GABAARs containing alpha-1 and beta-2 or -3 subunits exhibit synaptogenic activity; the gamma-2 subunit being necessary but not sufficient to induce rapid synaptic contacts formation. GABAARs function also as histamine receptor where histamine binds at the interface of two neighboring beta subunits and potentiates GABA response. GABAARs containing alpha, beta and epsilon subunits also permit spontaneous chloride channel activity while preserving the structural information required for GABA-gated openings. Alpha-1-mediated plasticity in the orbitofrontal cortex regulates context-dependent action selection. Together with rho subunits, may also control neuronal and glial GABAergic transmission in the cerebellum. The chain is Gamma-aminobutyric acid receptor subunit alpha-1 (GABRA1) from Bos taurus (Bovine).